The following is a 382-amino-acid chain: Anhydro-N-acetylmuramic acid kinase (382 aa).

9-16 (GTSLDGID) is an ATP binding site.

It belongs to the anhydro-N-acetylmuramic acid kinase family.

The enzyme catalyses 1,6-anhydro-N-acetyl-beta-muramate + ATP + H2O = N-acetyl-D-muramate 6-phosphate + ADP + H(+). The protein operates within amino-sugar metabolism; 1,6-anhydro-N-acetylmuramate degradation. It functions in the pathway cell wall biogenesis; peptidoglycan recycling. In terms of biological role, catalyzes the specific phosphorylation of 1,6-anhydro-N-acetylmuramic acid (anhMurNAc) with the simultaneous cleavage of the 1,6-anhydro ring, generating MurNAc-6-P. Is required for the utilization of anhMurNAc either imported from the medium or derived from its own cell wall murein, and thus plays a role in cell wall recycling. This Bacillus cereus (strain 03BB102) protein is Anhydro-N-acetylmuramic acid kinase.